A 400-amino-acid chain; its full sequence is Multidrug resistance protein 2 (400 aa).

The next 11 helical transmembrane spans lie at 11 to 31 (IFIILLSNIFVAFLGIGLIIP), 46 to 66 (TMGYLVAAFAISQLITSPFAG), 78 to 98 (IILGLLIFSLSELIFGLGTHV), 106 to 126 (ILGGVSAAFIMPAVTAYVADI), 142 to 162 (AISTGFIIGPGAGGFIAGFGI), 164 to 184 (MPFFFASAIALIAAVTSVFIL), 213 to 233 (IHPVYFIAFIIVFVMAFGLSA), 253 to 273 (IAAIITISSIVAVVIQVLLFG), 297 to 317 (FVSTVMSGFLTVLLVTCFIFL), 346 to 366 (STYTSLGNIFGPALGGILFDL), and 368 to 388 (IHYPFLFAGFVMIVGLGLTMV).

It belongs to the major facilitator superfamily. TCR/Tet family.

The protein resides in the cell membrane. Energy-dependent efflux pump responsible for decreased drug accumulation in multi-drug-resistant cells. Probably uses a transmembrane proton gradient as the energy source. Causes the efflux of a variety of toxic substances, including such structurally diverse compounds as ethidium bromide, rhodamine and acridine dyes, tetraphenylphosphonium, puromycin, chloramphenicol, doxorubicin, and fluoroquinolone antibiotics. This is Multidrug resistance protein 2 (blt) from Bacillus subtilis (strain 168).